A 643-amino-acid chain; its full sequence is 3D-(3,5/4)-trihydroxycyclohexane-1,2-dione hydrolase (643 aa).

A thiamine diphosphate-binding site is contributed by E65. A thiamine pyrophosphate binding region spans residues 441–521 (SLPGDLQRMW…VNVLLFDNCG (81 aa)). Residues D492 and N519 each contribute to the Mg(2+) site.

This sequence belongs to the TPP enzyme family. The cofactor is Mg(2+). Thiamine diphosphate serves as cofactor.

It carries out the reaction 3D-3,5/4-trihydroxycyclohexane-1,2-dione + H2O = 5-deoxy-D-glucuronate + H(+). It participates in polyol metabolism; myo-inositol degradation into acetyl-CoA; acetyl-CoA from myo-inositol: step 3/7. Functionally, involved in the cleavage of the C1-C2 bond of 3D-(3,5/4)-trihydroxycyclohexane-1,2-dione (THcHDO) to yield 5-deoxy-glucuronate (5DG). The polypeptide is 3D-(3,5/4)-trihydroxycyclohexane-1,2-dione hydrolase (Clostridium botulinum (strain Alaska E43 / Type E3)).